Reading from the N-terminus, the 178-residue chain is Ribosome maturation factor RimP (178 aa).

The protein belongs to the RimP family.

The protein localises to the cytoplasm. In terms of biological role, required for maturation of 30S ribosomal subunits. The sequence is that of Ribosome maturation factor RimP from Streptococcus pyogenes serotype M4 (strain MGAS10750).